The following is a 238-amino-acid chain: Deoxyribose-phosphate aldolase (238 aa).

D104 functions as the Proton donor/acceptor in the catalytic mechanism. The active-site Schiff-base intermediate with acetaldehyde is K168. K197 acts as the Proton donor/acceptor in catalysis.

It belongs to the DeoC/FbaB aldolase family. DeoC type 1 subfamily.

The protein localises to the cytoplasm. The enzyme catalyses 2-deoxy-D-ribose 5-phosphate = D-glyceraldehyde 3-phosphate + acetaldehyde. Its pathway is carbohydrate degradation; 2-deoxy-D-ribose 1-phosphate degradation; D-glyceraldehyde 3-phosphate and acetaldehyde from 2-deoxy-alpha-D-ribose 1-phosphate: step 2/2. Functionally, catalyzes a reversible aldol reaction between acetaldehyde and D-glyceraldehyde 3-phosphate to generate 2-deoxy-D-ribose 5-phosphate. This chain is Deoxyribose-phosphate aldolase, found in Bacteroides thetaiotaomicron (strain ATCC 29148 / DSM 2079 / JCM 5827 / CCUG 10774 / NCTC 10582 / VPI-5482 / E50).